The primary structure comprises 420 residues: L-rhamnose isomerase (420 aa).

Histidine 264, aspartate 296, and aspartate 298 together coordinate Mn(2+).

It belongs to the rhamnose isomerase family. Mn(2+) is required as a cofactor.

The protein resides in the cytoplasm. It catalyses the reaction L-rhamnopyranose = L-rhamnulose. It functions in the pathway carbohydrate degradation; L-rhamnose degradation; glycerone phosphate from L-rhamnose: step 1/3. Its function is as follows. Catalyzes the interconversion of L-rhamnose and L-rhamnulose. In Listeria innocua serovar 6a (strain ATCC BAA-680 / CLIP 11262), this protein is L-rhamnose isomerase.